The following is a 269-amino-acid chain: 2-dehydro-3-deoxyphosphooctonate aldolase (269 aa).

This sequence belongs to the KdsA family.

The protein localises to the cytoplasm. The catalysed reaction is D-arabinose 5-phosphate + phosphoenolpyruvate + H2O = 3-deoxy-alpha-D-manno-2-octulosonate-8-phosphate + phosphate. It participates in carbohydrate biosynthesis; 3-deoxy-D-manno-octulosonate biosynthesis; 3-deoxy-D-manno-octulosonate from D-ribulose 5-phosphate: step 2/3. It functions in the pathway bacterial outer membrane biogenesis; lipopolysaccharide biosynthesis. This Chlamydia caviae (strain ATCC VR-813 / DSM 19441 / 03DC25 / GPIC) (Chlamydophila caviae) protein is 2-dehydro-3-deoxyphosphooctonate aldolase.